Consider the following 185-residue polypeptide: Transcription factor bHLH109 (185 aa).

The region spanning 67–117 (RSMEYRMMMEKKRRKEIKDKVDILQGLMPNHCTKPDLASKLENIIEYIKSL) is the bHLH domain.

Belongs to the bHLH protein family. Homodimer.

Its subcellular location is the nucleus. Its function is as follows. Transcription factor involved in somatic embryogenesis. Acts as a positive regulator of somatic embryo formation. Acts as a positive regulator of ECP63 by targeting its promoter and inducing its expression. This chain is Transcription factor bHLH109 (BHLH109), found in Arabidopsis thaliana (Mouse-ear cress).